Reading from the N-terminus, the 155-residue chain is Photosystem II extrinsic protein V (155 aa).

The signal sequence occupies residues M1–A20. Heme c is bound by residues C50, C53, H54, and H105.

It belongs to the cytochrome c family. PsbV subfamily. As to quaternary structure, PSII is composed of 1 copy each of membrane proteins PsbA, PsbB, PsbC, PsbD, PsbE, PsbF, PsbH, PsbI, PsbJ, PsbK, PsbL, PsbM, PsbT, PsbY, PsbZ, Psb30/Ycf12, at least 3 peripheral proteins of the oxygen-evolving complex and a large number of cofactors. It forms dimeric complexes. The extrinsic subunits in red algae are PsbO (OEC33), PsbQ', cytochrome c-550 and PsbU. The cofactor is heme c.

It localises to the plastid. The protein localises to the chloroplast thylakoid membrane. In terms of biological role, one of the extrinsic, lumenal subunits of photosystem II (PSII). PSII is a light-driven water plastoquinone oxidoreductase, using light energy to abstract electrons from H(2)O, generating a proton gradient subsequently used for ATP formation. The extrinsic proteins stabilize the structure of photosystem II oxygen-evolving complex (OEC), the ion environment of oxygen evolution and protect the OEC against heat-induced inactivation. Unlike the T.vulcanus ortholog, it does not bind by itself to PSII, but requires all extrinsic members of the OEC. The chain is Photosystem II extrinsic protein V from Cyanidium caldarium (Red alga).